The following is a 227-amino-acid chain: Orotidine 5'-phosphate decarboxylase (227 aa).

Residues aspartate 12, lysine 34, 61–70 (DLKLHDIPNT), threonine 117, arginine 178, glutamine 187, glycine 207, and arginine 208 each bind substrate. Lysine 63 (proton donor) is an active-site residue.

It belongs to the OMP decarboxylase family. Type 1 subfamily. As to quaternary structure, homodimer.

The enzyme catalyses orotidine 5'-phosphate + H(+) = UMP + CO2. The protein operates within pyrimidine metabolism; UMP biosynthesis via de novo pathway; UMP from orotate: step 2/2. Its function is as follows. Catalyzes the decarboxylation of orotidine 5'-monophosphate (OMP) to uridine 5'-monophosphate (UMP). The sequence is that of Orotidine 5'-phosphate decarboxylase from Anaeromyxobacter sp. (strain K).